Reading from the N-terminus, the 136-residue chain is MPREFTRSDRVSDAIQRLLAQVIPQEVRDPRLGMVNINAVAVSRDMAFAKVYVTFVGVTDEPKSLEGIGILNKASGFLRSFVARELSMRTVPKLQFIYDKTSIRGQELSSLIDRAIAEDRLHPQGDQTDDQQEGRD.

It belongs to the RbfA family. As to quaternary structure, monomer. Binds 30S ribosomal subunits, but not 50S ribosomal subunits or 70S ribosomes.

The protein resides in the cytoplasm. In terms of biological role, one of several proteins that assist in the late maturation steps of the functional core of the 30S ribosomal subunit. Associates with free 30S ribosomal subunits (but not with 30S subunits that are part of 70S ribosomes or polysomes). Required for efficient processing of 16S rRNA. May interact with the 5'-terminal helix region of 16S rRNA. This chain is Ribosome-binding factor A, found in Cellvibrio japonicus (strain Ueda107) (Pseudomonas fluorescens subsp. cellulosa).